Consider the following 162-residue polypeptide: NADH-quinone oxidoreductase subunit I (162 aa).

4Fe-4S ferredoxin-type domains follow at residues 54-83 and 93-122; these read RRYENGEERCIACKLCEAVCPALAITIESE and TRYDIDLTKCIFCGFCEESCPVDSIVETHI. [4Fe-4S] cluster-binding residues include Cys-63, Cys-66, Cys-69, Cys-73, Cys-102, Cys-105, Cys-108, and Cys-112.

Belongs to the complex I 23 kDa subunit family. NDH-1 is composed of 14 different subunits. Subunits NuoA, H, J, K, L, M, N constitute the membrane sector of the complex. It depends on [4Fe-4S] cluster as a cofactor.

The protein localises to the cell inner membrane. It catalyses the reaction a quinone + NADH + 5 H(+)(in) = a quinol + NAD(+) + 4 H(+)(out). Its function is as follows. NDH-1 shuttles electrons from NADH, via FMN and iron-sulfur (Fe-S) centers, to quinones in the respiratory chain. The immediate electron acceptor for the enzyme in this species is believed to be ubiquinone. Couples the redox reaction to proton translocation (for every two electrons transferred, four hydrogen ions are translocated across the cytoplasmic membrane), and thus conserves the redox energy in a proton gradient. In Paraburkholderia xenovorans (strain LB400), this protein is NADH-quinone oxidoreductase subunit I.